A 145-amino-acid polypeptide reads, in one-letter code: Neutral phospholipase A2 paradoxin-like beta chain (145 aa).

Residues 1-27 form the signal peptide; sequence MHPAHLLVLLAVCVSLLGASDIPPLPL. 7 cysteine pairs are disulfide-bonded: Cys38-Cys98, Cys54-Cys144, Cys56-Cys72, Cys71-Cys125, Cys78-Cys118, Cys87-Cys111, and Cys105-Cys116.

The protein belongs to the phospholipase A2 family. Group I subfamily. N49 sub-subfamily. As to quaternary structure, heterotrimer of alpha, beta, and gamma chains; non-covalently linked. In terms of tissue distribution, expressed by the venom gland.

The protein resides in the secreted. Its function is as follows. Heterotrimer: Snake venom phospholipase A2 (PLA2) heterotrimer that acts as a potent presynaptic neurotoxin by blocking synaptic transmission and synaptic vesicle recycling. May act by binding in a calcium-dependent fashion to neurotonal pentraxin-1 (NPTX1) and neurotonal pentraxin-2 (NPTX2), but not to neuronal pentraxin receptor (NPTXR). Also binds to taipoxin-associated calcium binding protein 49 (RCN2), a protein localized in the lumen of endoplasmic reticulum. Functionally, monomer (beta chain): Snake venom phospholipase A2 homolog that is neither toxic nor enzymatically active. Does not bind calcium. The polypeptide is Neutral phospholipase A2 paradoxin-like beta chain (Oxyuranus microlepidotus (Inland taipan)).